The following is a 149-amino-acid chain: Large ribosomal subunit protein bL9 (149 aa).

Belongs to the bacterial ribosomal protein bL9 family.

Functionally, binds to the 23S rRNA. The protein is Large ribosomal subunit protein bL9 of Dichelobacter nodosus (strain VCS1703A).